A 137-amino-acid chain; its full sequence is uncharacterized protein (137 aa).

The disordered stretch occupies residues 67–87; that stretch reads KSERQHQRVHHELPHDKPRQS. Positions 70 to 85 are enriched in basic and acidic residues; that stretch reads RQHQRVHHELPHDKPR.

This is an uncharacterized protein from Human cytomegalovirus (strain AD169) (HHV-5).